Here is a 358-residue protein sequence, read N- to C-terminus: Pre-mRNA-splicing factor spp2 (358 aa).

2 disordered regions span residues 1-250 and 298-358; these read MTDQ…RAVP and AWNQ…RGDR. Residues 24–40 show a composition bias toward basic residues; that stretch reads KTKKPSRPTHTRRHHAR. 2 stretches are compositionally biased toward basic and acidic residues: residues 80-137 and 145-160; these read LENR…DASR and RSRD…KDLQ. Over residues 174–185 the composition is skewed to polar residues; it reads NPKSTTTATSSF. Basic and acidic residues-rich tracts occupy residues 233–246 and 309–358; these read SSHD…HSDY and GDSR…RGDR.

Belongs to the SPP2 family. Associated with the spliceosome.

It localises to the nucleus. In terms of biological role, involved in spliceosome maturation and the first step of pre-mRNA splicing. The polypeptide is Pre-mRNA-splicing factor spp2 (msp-40) (Neurospora crassa (strain ATCC 24698 / 74-OR23-1A / CBS 708.71 / DSM 1257 / FGSC 987)).